The sequence spans 1846 residues: Insulin-like receptor (1846 aa).

3 N-linked (GlcNAc...) asparagine glycosylation sites follow: Asn-113, Asn-180, and Asn-364. Disulfide bonds link Cys-371/Cys-386, Cys-393/Cys-401, Cys-397/Cys-410, Cys-413/Cys-422, and Cys-426/Cys-438. Asn-453 is a glycosylation site (N-linked (GlcNAc...) asparagine). Cystine bridges form between Cys-469/Cys-483 and Cys-486/Cys-490. N-linked (GlcNAc...) asparagine glycosylation occurs at Asn-518. The cysteines at positions 615 and 646 are disulfide-linked. N-linked (GlcNAc...) asparagine glycans are attached at residues Asn-652, Asn-671, and Asn-696. Fibronectin type-III domains follow at residues 775–869, 969–1067, and 1077–1179; these read TPDP…TMMG, KPSS…LKRT, and LNET…TPGF. Residues 944-980 form a disordered region; that stretch reads EKAENLGKAPKTLGGKKPLIHISKKKPSSSSTTSTPA. Basic residues predominate over residues 961–970; that stretch reads PLIHISKKKP. Residues 970-1183 are Extracellular-facing; sequence PSSSSTTSTP…VMTPGFFTVE (214 aa). Low complexity predominate over residues 971–980; the sequence is SSSSTTSTPA. N-linked (GlcNAc...) asparagine glycosylation is found at Asn-1017, Asn-1047, Asn-1078, Asn-1087, and Asn-1093. Residues 1184-1204 form a helical membrane-spanning segment; that stretch reads IILGMLLVFLILMSIAGCIIY. The Cytoplasmic portion of the chain corresponds to 1205–1846; the sequence is YYIQVRYGKK…IEDNEHHPLV (642 aa). One can recognise a Protein kinase domain in the interval 1246 to 1528; it reads VVLGQQCGEG…LLAAEASPEF (283 aa). Residues 1252–1260 and Lys-1282 contribute to the ATP site; that span reads CGEGSFGKV. Catalysis depends on Asp-1388, which acts as the Proton acceptor. 2 disordered regions span residues 1718–1742 and 1769–1826; these read ISSM…TNWS and QQQQ…IFNG. The segment covering 1726–1742 has biased composition (polar residues); it reads STGASSSSYGVPQTNWS. The segment covering 1808 to 1821 has biased composition (low complexity); it reads YRNNGSPSRNGNSR.

The protein belongs to the protein kinase superfamily. Tyr protein kinase family. Insulin receptor subfamily. As to quaternary structure, tetramer of 2 alpha and 2 beta chains linked by disulfide bonds. The alpha chains contribute to the formation of the ligand-binding domain, while the beta chains carry the kinase domain. Interacts (via cytoplasmic domain) with shc-1 (PID domain). Interacts (via kinase domain) with daf-18 (via C-terminus). In terms of assembly, interacts with casy-1; promoting axonal localization. Mg(2+) is required as a cofactor.

The protein resides in the membrane. It localises to the cell projection. The protein localises to the axon. The enzyme catalyses L-tyrosyl-[protein] + ATP = O-phospho-L-tyrosyl-[protein] + ADP + H(+). With respect to regulation, autophosphorylation activates the kinase activity. Interaction with shc-1 may inhibit its activity. Insulin receptor-like tyrosine kinase which regulates metabolism, controls longevity and prevents developmental arrest at the dauer stage. Binding of INS family members may either stimulate, or antagonize, association of the receptor with downstream mediators such as pdk-1 and age-1. Required for germline progenitor proliferation during larval development. Plays a role in maintaining gonad integrity in a daf-16/FOXO-dependent manner. Required for the response to environmental stimuli such as light, food, pheromone, and temperature. Negatively regulates resistance to UV and oxidative stress. In a daf-16/FOXO-dependent manner, plays a role in regulating the response to white light. Role in immune function and pathogen resistance. Negatively regulates autophagy. Regulates daf-18/PTEN protein levels. Plays a role in controlling seam cell development during the larval stages. Functionally, required for taste avoidance learning in the cell body of ASER gustatory neurons. In terms of biological role, required for taste avoidance learning in axons of ASER gustatory neurons. This Caenorhabditis elegans protein is Insulin-like receptor.